Reading from the N-terminus, the 260-residue chain is Indole-3-glycerol phosphate synthase (260 aa).

It belongs to the TrpC family.

It catalyses the reaction 1-(2-carboxyphenylamino)-1-deoxy-D-ribulose 5-phosphate + H(+) = (1S,2R)-1-C-(indol-3-yl)glycerol 3-phosphate + CO2 + H2O. Its pathway is amino-acid biosynthesis; L-tryptophan biosynthesis; L-tryptophan from chorismate: step 4/5. In Lacticaseibacillus paracasei (strain ATCC 334 / BCRC 17002 / CCUG 31169 / CIP 107868 / KCTC 3260 / NRRL B-441) (Lactobacillus paracasei), this protein is Indole-3-glycerol phosphate synthase.